The chain runs to 490 residues: Lysine--tRNA ligase (490 aa).

Residues Glu398 and Glu405 each coordinate Mg(2+).

It belongs to the class-II aminoacyl-tRNA synthetase family. Homodimer. Requires Mg(2+) as cofactor.

It localises to the cytoplasm. The enzyme catalyses tRNA(Lys) + L-lysine + ATP = L-lysyl-tRNA(Lys) + AMP + diphosphate. The polypeptide is Lysine--tRNA ligase (Metamycoplasma arthritidis (strain 158L3-1) (Mycoplasma arthritidis)).